We begin with the raw amino-acid sequence, 180 residues long: Centromere protein M (180 aa).

Component of the CENPA-NAC complex, at least composed of CENPA, CENPC, CENPH, CENPM, CENPN, CENPT and CENPU. The CENPA-NAC complex interacts with the CENPA-CAD complex, composed of CENPI, CENPK, CENPL, CENPO, CENPP, CENPQ, CENPR and CENPS.

Its subcellular location is the nucleus. It is found in the cytoplasm. The protein resides in the chromosome. It localises to the centromere. The protein localises to the kinetochore. In terms of biological role, component of the CENPA-NAC (nucleosome-associated) complex, a complex that plays a central role in assembly of kinetochore proteins, mitotic progression and chromosome segregation. The CENPA-NAC complex recruits the CENPA-CAD (nucleosome distal) complex and may be involved in incorporation of newly synthesized CENPA into centromeres. The protein is Centromere protein M (CENPM) of Bos taurus (Bovine).